The chain runs to 81 residues: Cytochrome c oxidase subunit 7B2, mitochondrial (81 aa).

Residues 1–25 (MMFPLARNALSSLKIQSILQSMARH) constitute a mitochondrion transit peptide. The Mitochondrial matrix portion of the chain corresponds to 26-33 (SHVKHSPD). The helical transmembrane segment at 34 to 60 (FHDKYGNAVLASGTAFCVATWVFTATQ) threads the bilayer. The Mitochondrial intermembrane portion of the chain corresponds to 61-81 (IGIEWNLSPVGRVTPKEWKHQ).

Belongs to the cytochrome c oxidase VIIb family. Component of the cytochrome c oxidase (complex IV, CIV), a multisubunit enzyme composed of 14 subunits. The complex is composed of a catalytic core of 3 subunits MT-CO1, MT-CO2 and MT-CO3, encoded in the mitochondrial DNA, and 11 supernumerary subunits COX4I, COX5A, COX5B, COX6A, COX6B, COX6C, COX7A, COX7B, COX7C, COX8 and NDUFA4, which are encoded in the nuclear genome. The complex exists as a monomer or a dimer and forms supercomplexes (SCs) in the inner mitochondrial membrane with NADH-ubiquinone oxidoreductase (complex I, CI) and ubiquinol-cytochrome c oxidoreductase (cytochrome b-c1 complex, complex III, CIII), resulting in different assemblies (supercomplex SCI(1)III(2)IV(1) and megacomplex MCI(2)III(2)IV(2)).

The protein resides in the mitochondrion inner membrane. Its pathway is energy metabolism; oxidative phosphorylation. Component of the cytochrome c oxidase, the last enzyme in the mitochondrial electron transport chain which drives oxidative phosphorylation. The respiratory chain contains 3 multisubunit complexes succinate dehydrogenase (complex II, CII), ubiquinol-cytochrome c oxidoreductase (cytochrome b-c1 complex, complex III, CIII) and cytochrome c oxidase (complex IV, CIV), that cooperate to transfer electrons derived from NADH and succinate to molecular oxygen, creating an electrochemical gradient over the inner membrane that drives transmembrane transport and the ATP synthase. Cytochrome c oxidase is the component of the respiratory chain that catalyzes the reduction of oxygen to water. Electrons originating from reduced cytochrome c in the intermembrane space (IMS) are transferred via the dinuclear copper A center (CU(A)) of subunit 2 and heme A of subunit 1 to the active site in subunit 1, a binuclear center (BNC) formed by heme A3 and copper B (CU(B)). The BNC reduces molecular oxygen to 2 water molecules using 4 electrons from cytochrome c in the IMS and 4 protons from the mitochondrial matrix. The protein is Cytochrome c oxidase subunit 7B2, mitochondrial (COX7B2) of Homo sapiens (Human).